The following is a 134-amino-acid chain: Small ribosomal subunit protein uS8 (134 aa).

It belongs to the universal ribosomal protein uS8 family. In terms of assembly, part of the 30S ribosomal subunit. Contacts proteins S5 and S12.

One of the primary rRNA binding proteins, it binds directly to 16S rRNA central domain where it helps coordinate assembly of the platform of the 30S subunit. This Thermotoga maritima (strain ATCC 43589 / DSM 3109 / JCM 10099 / NBRC 100826 / MSB8) protein is Small ribosomal subunit protein uS8.